The chain runs to 193 residues: Ion-translocating oxidoreductase complex subunit A (193 aa).

Helical transmembrane passes span 5–25, 39–59, 62–82, 102–122, 134–154, and 171–191; these read LLLF…FLGL, IGMG…AWMV, FILL…LVIA, LLGI…VALL, AVYG…FAAI, and SIAL…TGLV.

Belongs to the NqrDE/RnfAE family. In terms of assembly, the complex is composed of six subunits: RnfA, RnfB, RnfC, RnfD, RnfE and RnfG.

It localises to the cell inner membrane. Functionally, part of a membrane-bound complex that couples electron transfer with translocation of ions across the membrane. This chain is Ion-translocating oxidoreductase complex subunit A, found in Yersinia enterocolitica serotype O:8 / biotype 1B (strain NCTC 13174 / 8081).